The primary structure comprises 853 residues: Protein translocase subunit SecA 1 (853 aa).

ATP contacts are provided by residues Q85, G103 to T107, and D492.

Belongs to the SecA family. As to quaternary structure, monomer and homodimer. Part of the essential Sec protein translocation apparatus which comprises SecA, SecYEG and auxiliary proteins SecDF. Other proteins may also be involved.

It localises to the cell membrane. It is found in the cytoplasm. It carries out the reaction ATP + H2O + cellular proteinSide 1 = ADP + phosphate + cellular proteinSide 2.. Part of the Sec protein translocase complex. Interacts with the SecYEG preprotein conducting channel. Has a central role in coupling the hydrolysis of ATP to the transfer of proteins into and across the cell membrane, serving as an ATP-driven molecular motor driving the stepwise translocation of polypeptide chains across the membrane. The chain is Protein translocase subunit SecA 1 from Corynebacterium diphtheriae (strain ATCC 700971 / NCTC 13129 / Biotype gravis).